The primary structure comprises 525 residues: GMP synthase [glutamine-hydrolyzing] (525 aa).

The Glutamine amidotransferase type-1 domain maps to 9 to 207; it reads RILILDFGSQ…VRDICQCEAL (199 aa). Cys86 functions as the Nucleophile in the catalytic mechanism. Catalysis depends on residues His181 and Glu183. The GMPS ATP-PPase domain occupies 208–400; it reads WTPAKIIDDA…LGLPYDMLYR (193 aa). 235–241 is a binding site for ATP; sequence SGGVDSS.

Homodimer.

It carries out the reaction XMP + L-glutamine + ATP + H2O = GMP + L-glutamate + AMP + diphosphate + 2 H(+). Its pathway is purine metabolism; GMP biosynthesis; GMP from XMP (L-Gln route): step 1/1. Its function is as follows. Catalyzes the synthesis of GMP from XMP. The chain is GMP synthase [glutamine-hydrolyzing] from Salmonella typhi.